Here is a 1036-residue protein sequence, read N- to C-terminus: Isoleucine--tRNA ligase (1036 aa).

The short motif at 48–58 (PTANGKPHVGH) is the 'HIGH' region element. The short motif at 590–594 (KMSKS) is the 'KMSKS' region element. K593 provides a ligand contact to ATP.

The protein belongs to the class-I aminoacyl-tRNA synthetase family. IleS type 2 subfamily. In terms of assembly, monomer. It depends on Zn(2+) as a cofactor.

It is found in the cytoplasm. The enzyme catalyses tRNA(Ile) + L-isoleucine + ATP = L-isoleucyl-tRNA(Ile) + AMP + diphosphate. Functionally, catalyzes the attachment of isoleucine to tRNA(Ile). As IleRS can inadvertently accommodate and process structurally similar amino acids such as valine, to avoid such errors it has two additional distinct tRNA(Ile)-dependent editing activities. One activity is designated as 'pretransfer' editing and involves the hydrolysis of activated Val-AMP. The other activity is designated 'posttransfer' editing and involves deacylation of mischarged Val-tRNA(Ile). The protein is Isoleucine--tRNA ligase of Clostridium tetani (strain Massachusetts / E88).